The primary structure comprises 303 residues: Oxygen-dependent coproporphyrinogen-III oxidase (303 aa).

S93 contacts substrate. The a divalent metal cation site is built by H97 and H107. The active-site Proton donor is the H107. 109-111 (NIR) provides a ligand contact to substrate. H146 and H176 together coordinate a divalent metal cation. The important for dimerization stretch occupies residues 241–276 (YVEFNLLLDRGTLFGIQSNGRIESILSSMPPLVKWE).

It belongs to the aerobic coproporphyrinogen-III oxidase family. Homodimer. A divalent metal cation is required as a cofactor.

The protein resides in the cytoplasm. The catalysed reaction is coproporphyrinogen III + O2 + 2 H(+) = protoporphyrinogen IX + 2 CO2 + 2 H2O. Its pathway is porphyrin-containing compound metabolism; protoporphyrin-IX biosynthesis; protoporphyrinogen-IX from coproporphyrinogen-III (O2 route): step 1/1. In terms of biological role, involved in the heme biosynthesis. Catalyzes the aerobic oxidative decarboxylation of propionate groups of rings A and B of coproporphyrinogen-III to yield the vinyl groups in protoporphyrinogen-IX. The sequence is that of Oxygen-dependent coproporphyrinogen-III oxidase from Wigglesworthia glossinidia brevipalpis.